Reading from the N-terminus, the 467-residue chain is Interleukin-6 receptor subunit alpha (467 aa).

Residues 1–19 (MLAVGCALLTALLAAPGMA) form the signal peptide. The Ig-like C2-type domain maps to 20–112 (LAPRGCSKLE…AGSVRLLVDA (93 aa)). The Extracellular segment spans residues 20–365 (LAPRGCSKLE…VQDSASVPLP (346 aa)). 4 cysteine pairs are disulfide-bonded: Cys25-Cys193, Cys47-Cys96, Cys121-Cys132, and Cys165-Cys176. 2 N-linked (GlcNAc...) asparagine glycosylation sites follow: Asn55 and Asn93. 2 Fibronectin type-III domains span residues 113–217 (PPEE…LQPD) and 218–316 (PPVN…IPWT). N-linked (GlcNAc...) asparagine glycans are attached at residues Asn221 and Asn245. The WSXWS motif signature appears at 303 to 307 (WSEWS). The segment at 315–357 (WTESRSSPAETELPLSTQAPTTNEDDEDISSKESANATSLPVQ) is disordered. Composition is skewed to polar residues over residues 317-336 (ESRS…APTT) and 346-357 (KESANATSLPVQ). Asn350 carries an N-linked (GlcNAc...) asparagine glycan. Residue Thr352 is glycosylated (O-linked (GlcNAc) threonine). The helical transmembrane segment at 366-386 (TFLVAGGSLAFGTLLCIGIIL) threads the bilayer. At 387–467 (RFKKTGQLQA…VSNRDYFFPR (81 aa)) the chain is on the cytoplasmic side. A disordered region spans residues 428-467 (ISPPVSPNSLGDNTSRNSRPEARGPQSPYDVSNRDYFFPR).

This sequence belongs to the type I cytokine receptor family. Type 3 subfamily. In terms of assembly, component of a hexamer of two molecules each of IL6, IL6R and IL6ST; first binds to IL6 to associate with the signaling subunit IL6ST. Interacts (via N-terminal ectodomain) with SORL1; this interaction may affect IL6-binding to IL6R, hence decrease IL6 'classic-signaling'. Also interacts with SORL1; this interaction leads to soluble IL6R internalization. May form a trimeric complex with the soluble SORL1 ectodomain and circulating IL6 receptor; this interaction might stabilize circulating IL6, hence promote IL6 'trans-signaling'. In terms of processing, a short soluble form is also released from the membrane by proteolysis. The sIL6R is formed by limited proteolysis of membrane-bound receptors, a process referred to as ectodomain shedding. mIL6R is cleaved by the proteases ADAM10 and ADAM17. Glycosylated. Glycosylation is dispensable for transport, signaling, and cell-surface turnover. Glycosylation at Asn-55 is a protease-regulatory exosite. Glycosylation is required for ADAM17-mediated proteolysis. In terms of tissue distribution, expressed in liver.

It localises to the cell membrane. It is found in the secreted. With respect to regulation, classic and trans-signaling are both inhibited by tocilizumab, a humanized monoclonal antibody that blocks interleukin IL6R signaling. Part of the receptor for interleukin 6. Binds to IL6 with low affinity, but does not transduce a signal. Signal activation necessitate an association with IL6ST. Activation leads to the regulation of the immune response, acute-phase reactions and hematopoiesis. The interaction with membrane-bound IL6R and IL6ST stimulates 'classic signaling', the restricted expression of the IL6R limits classic IL6 signaling to only a few tissues such as the liver and some cells of the immune system. Whereas the binding of IL6 and soluble IL6R to IL6ST stimulates 'trans-signaling'. Alternatively, 'cluster signaling' occurs when membrane-bound IL6:IL6R complexes on transmitter cells activate IL6ST receptors on neighboring receiver cells. Functionally, signaling via the membrane-bound IL6R is mostly regenerative and anti-inflammatory. Drives naive CD4(+) T cells to the Th17 lineage, through 'cluster signaling' by dendritic cells. In terms of biological role, soluble form of IL6 receptor (sIL6R) that acts as an agonist of IL6 activity. The IL6:sIL6R complex (hyper-IL6) binds to IL6ST/gp130 on cell surfaces and induces signaling also on cells that do not express membrane-bound IL6R in a process called IL6 'trans-signaling'. sIL6R is causative for the pro-inflammatory properties of IL6 and an important player in the development of chronic inflammatory diseases. In complex with IL6, is required for induction of VEGF production. Plays a protective role during liver injury, being required for maintenance of tissue regeneration. 'Trans-signaling' in central nervous system regulates energy and glucose homeostasis. This chain is Interleukin-6 receptor subunit alpha (IL6R), found in Sus scrofa (Pig).